A 468-amino-acid polypeptide reads, in one-letter code: Tyrosine-protein phosphatase YopH (468 aa).

Positions 127-194 (ARGHVSSHSH…TVSPYGPEAR (68 aa)) are disordered. Positions 130–140 (HVSSHSHSVLH) are enriched in low complexity. Residues 152 to 461 (SHLDPRTPPL…DVLIKLAEGQ (310 aa)) enclose the Tyrosine-protein phosphatase domain. Cys403 serves as the catalytic Phosphocysteine intermediate.

The protein belongs to the protein-tyrosine phosphatase family. Non-receptor class subfamily. As to quaternary structure, monomer.

The protein resides in the secreted. It catalyses the reaction O-phospho-L-tyrosyl-[protein] + H2O = L-tyrosyl-[protein] + phosphate. Functionally, essential virulence determinant. This protein is a protein tyrosine phosphatase. The essential function of YopH in Yersinia pathogenesis is host-protein dephosphorylation. It contributes to the ability of the bacteria to resist phagocytosis by peritoneal macrophages. This chain is Tyrosine-protein phosphatase YopH (yopH), found in Yersinia enterocolitica.